We begin with the raw amino-acid sequence, 36 residues long: Photosystem I reaction center subunit VIII (36 aa).

Residues 9–29 (IFVPLVGLVFPAIAMASLSLY) traverse the membrane as a helical segment.

The protein belongs to the PsaI family.

The protein localises to the plastid. It is found in the chloroplast thylakoid membrane. Functionally, may help in the organization of the PsaL subunit. This is Photosystem I reaction center subunit VIII from Phalaenopsis aphrodite subsp. formosana (Moth orchid).